The sequence spans 392 residues: Formate-dependent phosphoribosylglycinamide formyltransferase (392 aa).

Residues 20 to 21 (EL) and Glu-80 contribute to the N(1)-(5-phospho-beta-D-ribosyl)glycinamide site. ATP-binding positions include Arg-112, Lys-153, 158–163 (SSGKGQ), 193–196 (EGFV), and Glu-201. In terms of domain architecture, ATP-grasp spans 117-306 (RLAAEELGLP…EFALHVRAIL (190 aa)). Glu-265 and Glu-277 together coordinate Mg(2+). Residues Asp-284, Lys-355, and 362-363 (RR) each bind N(1)-(5-phospho-beta-D-ribosyl)glycinamide.

Belongs to the PurK/PurT family. In terms of assembly, homodimer.

It carries out the reaction N(1)-(5-phospho-beta-D-ribosyl)glycinamide + formate + ATP = N(2)-formyl-N(1)-(5-phospho-beta-D-ribosyl)glycinamide + ADP + phosphate + H(+). Its pathway is purine metabolism; IMP biosynthesis via de novo pathway; N(2)-formyl-N(1)-(5-phospho-D-ribosyl)glycinamide from N(1)-(5-phospho-D-ribosyl)glycinamide (formate route): step 1/1. In terms of biological role, involved in the de novo purine biosynthesis. Catalyzes the transfer of formate to 5-phospho-ribosyl-glycinamide (GAR), producing 5-phospho-ribosyl-N-formylglycinamide (FGAR). Formate is provided by PurU via hydrolysis of 10-formyl-tetrahydrofolate. The chain is Formate-dependent phosphoribosylglycinamide formyltransferase from Aeromonas salmonicida (strain A449).